A 129-amino-acid polypeptide reads, in one-letter code: NADPH-dependent 7-cyano-7-deazaguanine reductase (129 aa).

The active-site Thioimide intermediate is Cys-34. Residue Asp-41 is the Proton donor of the active site. Residues 56-58 and 75-76 contribute to the substrate site; these read VEL and HE.

This sequence belongs to the GTP cyclohydrolase I family. QueF type 1 subfamily.

The protein localises to the cytoplasm. It carries out the reaction 7-aminomethyl-7-carbaguanine + 2 NADP(+) = 7-cyano-7-deazaguanine + 2 NADPH + 3 H(+). It participates in tRNA modification; tRNA-queuosine biosynthesis. Catalyzes the NADPH-dependent reduction of 7-cyano-7-deazaguanine (preQ0) to 7-aminomethyl-7-deazaguanine (preQ1). The protein is NADPH-dependent 7-cyano-7-deazaguanine reductase of Alkalilimnicola ehrlichii (strain ATCC BAA-1101 / DSM 17681 / MLHE-1).